The sequence spans 890 residues: Translation initiation factor IF-2 (890 aa).

Positions 45–304 are disordered; that stretch reads LIDHLNQKNS…LQQGFQKPAQ (260 aa). Over residues 67 to 81 the composition is skewed to polar residues; that stretch reads STLNIPGTGGKSKSV. The span at 92–217 shows a compositional bias: basic and acidic residues; sequence VKRDPQEAER…RMAEENKWID (126 aa). The segment covering 252–266 has biased composition (basic residues); the sequence is GRGRNAKAARPKKGN. A compositionally biased stretch (basic and acidic residues) spans 267-280; it reads KHAESKADREEARA. Positions 389–558 constitute a tr-type G domain; the sequence is PRAPVVTIMG…LLQAEVLELK (170 aa). Positions 398 to 405 are G1; the sequence is GHVDHGKT. 398-405 is a GTP binding site; the sequence is GHVDHGKT. Residues 423–427 are G2; that stretch reads GITQH. The G3 stretch occupies residues 444–447; sequence DTPG. Residues 444-448 and 498-501 each bind GTP; these read DTPGH and NKID. The interval 498–501 is G4; sequence NKID. The interval 534-536 is G5; sequence SAK. N6-acetyllysine is present on lysine 808.

Belongs to the TRAFAC class translation factor GTPase superfamily. Classic translation factor GTPase family. IF-2 subfamily.

It localises to the cytoplasm. One of the essential components for the initiation of protein synthesis. Protects formylmethionyl-tRNA from spontaneous hydrolysis and promotes its binding to the 30S ribosomal subunits. Also involved in the hydrolysis of GTP during the formation of the 70S ribosomal complex. The polypeptide is Translation initiation factor IF-2 (Escherichia coli O81 (strain ED1a)).